The chain runs to 794 residues: MLTRNCLSLLLWVLFDGGLLTPLQPQPQQTLATEPRENVIHLPGQRSHFQRVKRGWVWNQFFVLEEYVGSEPQYVGKLHSDLDKGEGTVKYTLSGDGAGTVFTIDETTGDIHAIRSLDREEKPFYTLRAQAVDIETRKPLEPESEFIIKVQDINDNEPKFLDGPYVATVPEMSPVGAYVLQVKATDADDPTYGNSARVVYSILQGQPYFSIDPKTGVIRTALPNMDREVKEQYQVLIQAKDMGGQLGGLAGTTIVNITLTDVNDNPPRFPKSIFHLKVPESSPIGSAIGRIRAVDPDFGQNAEIEYNIVPGDGGNLFDIVTDEDTQEGVIKLKKPLDFETKKAYTFKVEASNLHLDHRFHSAGPFKDTATVKISVLDVDEPPVFSKPLYTMEVYEDTPVGTIIGAVTAQDLDVGSSAVRYFIDWKSDGDSYFTIDGNEGTIATNELLDRESTAQYNFSIIASKVSNPLLTSKVNILINVLDVNEFPPEISVPYETAVCENAKPGQIIQIVSAADRDLSPAGQQFSFRLSPEAAIKPNFTVRDFRNNTAGIETRRNGYSRRQQELYFLPVVIEDSSYPVQSSTNTMTIRVCRCDSDGTILSCNVEAIFLPVGLSTGALIAILLCIVILLAIVVLYVALRRQKKKDTLMTSKEDIRDNVIHYDDEGGGEEDTQAFDIGALRNPKVIEENKIRRDIKPDSLCLPRQRPPMEDNTDIRDFIHQRLQENDVDPTAPPYDSLATYAYEGSGSVAESLSSIDSLTTEADQDYDYLTDWGPRFKVLADMFGEEESYNPDKVT.

Positions 1–23 (MLTRNCLSLLLWVLFDGGLLTPL) are cleaved as a signal peptide. A propeptide spanning residues 24-54 (QPQPQQTLATEPRENVIHLPGQRSHFQRVKR) is cleaved from the precursor. Cadherin domains lie at 55–160 (GWVW…EPKF), 161–269 (LDGP…PPRF), 270–384 (PKSI…PPVF), 385–487 (SKPL…EFPP), and 488–609 (EISV…IFLP). Residues 55–609 (GWVWNQFFVL…SCNVEAIFLP (555 aa)) are Extracellular-facing. An N-linked (GlcNAc...) asparagine glycan is attached at N256. N-linked (GlcNAc...) asparagine glycosylation is found at N456, N537, and N545. The chain crosses the membrane as a helical span at residues 610 to 637 (VGLSTGALIAILLCIVILLAIVVLYVAL). Residues 638–794 (RRQKKKDTLM…EESYNPDKVT (157 aa)) lie on the Cytoplasmic side of the membrane. At S787 the chain carries Phosphoserine.

As to expression, brain.

It localises to the cell membrane. Cadherins are calcium-dependent cell adhesion proteins. They preferentially interact with themselves in a homophilic manner in connecting cells; cadherins may thus contribute to the sorting of heterogeneous cell types. In Homo sapiens (Human), this protein is Cadherin-12 (CDH12).